A 358-amino-acid chain; its full sequence is Chorismate synthase (358 aa).

Residue arginine 47 participates in NADP(+) binding. Residues 124-126 (RSS), 240-241 (NA), glycine 284, 299-303 (KPIAT), and arginine 325 each bind FMN.

It belongs to the chorismate synthase family. In terms of assembly, homotetramer. It depends on FMNH2 as a cofactor.

It catalyses the reaction 5-O-(1-carboxyvinyl)-3-phosphoshikimate = chorismate + phosphate. It participates in metabolic intermediate biosynthesis; chorismate biosynthesis; chorismate from D-erythrose 4-phosphate and phosphoenolpyruvate: step 7/7. Catalyzes the anti-1,4-elimination of the C-3 phosphate and the C-6 proR hydrogen from 5-enolpyruvylshikimate-3-phosphate (EPSP) to yield chorismate, which is the branch point compound that serves as the starting substrate for the three terminal pathways of aromatic amino acid biosynthesis. This reaction introduces a second double bond into the aromatic ring system. The sequence is that of Chorismate synthase from Bacteroides thetaiotaomicron (strain ATCC 29148 / DSM 2079 / JCM 5827 / CCUG 10774 / NCTC 10582 / VPI-5482 / E50).